Here is a 146-residue protein sequence, read N- to C-terminus: Snaclec coagulation factor IX/factor X-binding protein subunit B (146 aa).

The N-terminal stretch at 1 to 23 (MGRFIFLSFGLLVVFLSLSGTGA) is a signal peptide. 3 cysteine pairs are disulfide-bonded: cysteine 25–cysteine 36, cysteine 53–cysteine 142, and cysteine 119–cysteine 134. In terms of domain architecture, C-type lectin spans 32–143 (YEGHCYKPFN…CRMEAYFVCE (112 aa)). Ca(2+)-binding residues include serine 64 and glutamate 70. Glutamate 143 is a Ca(2+) binding site.

This sequence belongs to the snaclec family. Heterodimer with subunit A of IX/X-bp or IX-bp; disulfide-linked. In terms of tissue distribution, expressed by the venom gland.

The protein localises to the secreted. Its function is as follows. When linked to subunit A of IX/X-bp, anticoagulant protein which binds to the gamma-carboxyglutamic acid-domain regions of factors IX (F9) and factor X (F10) in the presence of calcium with a 1 to 1 stoichiometry. In terms of biological role, when linked to subunit A of IX-bp, anticoagulant protein which binds to the gamma-carboxyglutamic acid-domain regions of factor IX (but not to factor X) in the presence of calcium with a 1 to 1 stoichiometry. This chain is Snaclec coagulation factor IX/factor X-binding protein subunit B, found in Gloydius halys (Chinese water mocassin).